A 451-amino-acid polypeptide reads, in one-letter code: Bifunctional protein GlmU (451 aa).

A pyrophosphorylase region spans residues 1–225; that stretch reads MSLAVVILAA…EFEIQGVNDR (225 aa). UDP-N-acetyl-alpha-D-glucosamine-binding positions include 8–11, Lys-22, Gln-73, 78–79, 99–101, Gly-135, Glu-150, Asn-165, and Asn-223; these read LAAG, GT, and YGD. Residue Asp-101 participates in Mg(2+) binding. Asn-223 contacts Mg(2+). The interval 226–246 is linker; sequence IQLAQLEREWQKHIAEVIMSK. The tract at residues 247-451 is N-acetyltransferase; sequence GVSVADPSRI…IDTWQRPVKK (205 aa). UDP-N-acetyl-alpha-D-glucosamine-binding residues include Arg-329 and Lys-347. Residue His-359 is the Proton acceptor of the active site. Residues Tyr-362 and Asn-373 each contribute to the UDP-N-acetyl-alpha-D-glucosamine site. Acetyl-CoA is bound by residues Ala-376, 382-383, Ser-401, Ala-419, and Arg-436; that span reads NY.

It in the N-terminal section; belongs to the N-acetylglucosamine-1-phosphate uridyltransferase family. The protein in the C-terminal section; belongs to the transferase hexapeptide repeat family. Homotrimer. Mg(2+) serves as cofactor.

The protein resides in the cytoplasm. The catalysed reaction is alpha-D-glucosamine 1-phosphate + acetyl-CoA = N-acetyl-alpha-D-glucosamine 1-phosphate + CoA + H(+). The enzyme catalyses N-acetyl-alpha-D-glucosamine 1-phosphate + UTP + H(+) = UDP-N-acetyl-alpha-D-glucosamine + diphosphate. It participates in nucleotide-sugar biosynthesis; UDP-N-acetyl-alpha-D-glucosamine biosynthesis; N-acetyl-alpha-D-glucosamine 1-phosphate from alpha-D-glucosamine 6-phosphate (route II): step 2/2. The protein operates within nucleotide-sugar biosynthesis; UDP-N-acetyl-alpha-D-glucosamine biosynthesis; UDP-N-acetyl-alpha-D-glucosamine from N-acetyl-alpha-D-glucosamine 1-phosphate: step 1/1. It functions in the pathway bacterial outer membrane biogenesis; LPS lipid A biosynthesis. Functionally, catalyzes the last two sequential reactions in the de novo biosynthetic pathway for UDP-N-acetylglucosamine (UDP-GlcNAc). The C-terminal domain catalyzes the transfer of acetyl group from acetyl coenzyme A to glucosamine-1-phosphate (GlcN-1-P) to produce N-acetylglucosamine-1-phosphate (GlcNAc-1-P), which is converted into UDP-GlcNAc by the transfer of uridine 5-monophosphate (from uridine 5-triphosphate), a reaction catalyzed by the N-terminal domain. The chain is Bifunctional protein GlmU from Francisella philomiragia subsp. philomiragia (strain ATCC 25017 / CCUG 19701 / FSC 153 / O#319-036).